The following is a 161-amino-acid chain: RNA pyrophosphohydrolase (161 aa).

The Nudix hydrolase domain maps to 12–154 (PYRPGVGMMI…KRKLYQAVVK (143 aa)). The Nudix box signature appears at 46–67 (GGIVPGETPSIAAMREMLEEIG).

Belongs to the Nudix hydrolase family. RppH subfamily. Requires a divalent metal cation as cofactor.

Its function is as follows. Accelerates the degradation of transcripts by removing pyrophosphate from the 5'-end of triphosphorylated RNA, leading to a more labile monophosphorylated state that can stimulate subsequent ribonuclease cleavage. The sequence is that of RNA pyrophosphohydrolase from Rickettsia rickettsii (strain Iowa).